The primary structure comprises 607 residues: Chaperone protein DnaK (607 aa).

Thr174 is subject to Phosphothreonine; by autocatalysis. Residues 579–592 (AQAQAQQQAGANAG) are compositionally biased toward low complexity. Residues 579–607 (AQAQAQQQAGANAGSDKKDEDVAEAEVVD) form a disordered region.

It belongs to the heat shock protein 70 family.

Acts as a chaperone. In Fusobacterium nucleatum subsp. nucleatum (strain ATCC 25586 / DSM 15643 / BCRC 10681 / CIP 101130 / JCM 8532 / KCTC 2640 / LMG 13131 / VPI 4355), this protein is Chaperone protein DnaK.